The sequence spans 318 residues: Petal death protein (318 aa).

Residues 1–3 (MAP) constitute a propeptide, removed in mature form. A disordered region spans residues 1-24 (MAPPNGTTNGETEVATQGSYTAVS). Mg(2+)-binding residues include Asp107, Asp109, and Lys142.

The protein belongs to the isocitrate lyase/PEP mutase superfamily. Homodimer and homotetramer formed by a dimer of homodimer. The cofactor is Mg(2+). Mn(2+) is required as a cofactor. Fe(2+) serves as cofactor. It depends on Co(2+) as a cofactor. Accumulates in senescing flower petals.

It carries out the reaction oxaloacetate + H2O = oxalate + acetate + H(+). Catalyzes cleavage of the C(2)-C(3) bond in oxaloacetate and in (2R)-alkyl malate derivatives to form oxalate and acetate, and alkyl carboxylates and R-ketocarboxylates, respectively. This chain is Petal death protein, found in Dianthus caryophyllus (Carnation).